Reading from the N-terminus, the 217-residue chain is MGQKVCAHGFRVGPTLIKGWDSVLYAEKHYKTLFIQDLKIRDVINKGFNQAQISRVLIERPSNKSIIININAKKPNIIIGRNGSEIDKLKKAIEKMTSLKEVYINIHEVRKFNIDAAIVAQTIALQLEKRVSFRKAMKTAIQASFKQGGQGIRVSCSGRLGGAEIARTEWYIEGRMPLHTLRADIDYSTAEAITTYGVIGVKVWIYKGEYTENKRYN.

In terms of domain architecture, KH type-2 spans 40-110; it reads IRDVINKGFN…EVYINIHEVR (71 aa).

Belongs to the universal ribosomal protein uS3 family. Part of the 30S ribosomal subunit. Forms a tight complex with proteins S10 and S14.

In terms of biological role, binds the lower part of the 30S subunit head. Binds mRNA in the 70S ribosome, positioning it for translation. In Rickettsia massiliae (strain Mtu5), this protein is Small ribosomal subunit protein uS3.